A 364-amino-acid chain; its full sequence is 3-isopropylmalate dehydrogenase (364 aa).

NAD(+) is bound at residue 78–91; it reads GKKWDYLSIDKRPE. The substrate site is built by arginine 99, arginine 109, arginine 138, and aspartate 227. 3 residues coordinate Mg(2+): aspartate 227, aspartate 251, and aspartate 255. 285-297 lines the NAD(+) pocket; the sequence is GSAPDIAGKNIAN.

This sequence belongs to the isocitrate and isopropylmalate dehydrogenases family. LeuB type 1 subfamily. In terms of assembly, homodimer. Requires Mg(2+) as cofactor. Mn(2+) is required as a cofactor.

It localises to the cytoplasm. The enzyme catalyses (2R,3S)-3-isopropylmalate + NAD(+) = 4-methyl-2-oxopentanoate + CO2 + NADH. Its pathway is amino-acid biosynthesis; L-leucine biosynthesis; L-leucine from 3-methyl-2-oxobutanoate: step 3/4. Functionally, catalyzes the oxidation of 3-carboxy-2-hydroxy-4-methylpentanoate (3-isopropylmalate) to 3-carboxy-4-methyl-2-oxopentanoate. The product decarboxylates to 4-methyl-2 oxopentanoate. The polypeptide is 3-isopropylmalate dehydrogenase (Buchnera aphidicola subsp. Uroleucon erigeronensis).